A 453-amino-acid chain; its full sequence is Calcium-binding tyrosine phosphorylation-regulated protein (453 aa).

In terms of domain architecture, RIIa spans 12–49; that stretch reads YGLKTLLEGVSRAILKTNPTNITQFAAVYFKELIVFRE. 3 disordered regions span residues 86-165, 246-278, and 406-453; these read PIKP…PVSA, PVSE…QVTS, and IINP…PEQV. The segment covering 143–154 has biased composition (low complexity); that stretch reads DKPTTPKTDYTP.

As to quaternary structure, interacts with FSCB. Post-translationally, phosphorylated on tyrosine residues during in vitro capacitation. Dephosphorylation affects its ability to bind calcium. As to expression, expressed in spermatozoa.

Its subcellular location is the cytoplasm. It localises to the cytoskeleton. The protein localises to the cell projection. It is found in the cilium. The protein resides in the flagellum. Functionally, may function as a regulator of both motility- and head-associated functions such as capacitation and the acrosome reaction. May bind calcium in vitro. The polypeptide is Calcium-binding tyrosine phosphorylation-regulated protein (Cabyr) (Mus musculus (Mouse)).